The chain runs to 50 residues: ALEASGCLNCHGTDLTGXPAXPATMPPGMFKGSNQQLKALSEFIHGLSAK.

Residues Cys-7, Cys-10, His-11, and Met-25 each coordinate heme.

Binds 1 heme group per subunit.

It localises to the cell membrane. This chain is Cytochrome c-555, found in Schinkia azotoformans (Bacillus azotoformans).